Reading from the N-terminus, the 884-residue chain is Putative GTP diphosphokinase RSH1, chloroplastic (884 aa).

A chloroplast-targeting transit peptide spans 1–55 (MTSASSMSVSVECVNICNLTKGDGNARSDCSALSCAWKAPRALTGFLASTAHPPV). In terms of domain architecture, HD spans 172 to 279 (FIIHPVAVAR…VKLADRLHNM (108 aa)). A TGS domain is found at 563-626 (LGSRVFVFTP…ENAEVVEIVT (64 aa)). Positions 711 to 727 (QSQDKSRDTTPAPQNGS) are enriched in polar residues. The disordered stretch occupies residues 711–747 (QSQDKSRDTTPAPQNGSVWAPKVNGKHNKAIKNSSSD). The region spanning 797 to 868 (WLCVVSMDRK…LVLGVLGWSS (72 aa)) is the ACT domain.

It belongs to the RelA/SpoT family. As to quaternary structure, interacts with RPP4. Interacts with RPP5. In terms of tissue distribution, expressed in hypocotyls, shoots, cotyledons, rosette leaves, sepals and pistils.

The protein localises to the plastid. The protein resides in the chloroplast. It carries out the reaction GTP + ATP = guanosine 3'-diphosphate 5'-triphosphate + AMP. Functionally, may be involved in a rapid plant ppGpp (guanosine 3'-diphosphate 5'-diphosphate)-mediated response to pathogens and other stresses. Unable to functionally complement E.coli relA mutants. The chain is Putative GTP diphosphokinase RSH1, chloroplastic (RSH1) from Arabidopsis thaliana (Mouse-ear cress).